Reading from the N-terminus, the 176-residue chain is Myelin basic protein (176 aa).

The segment covering 1 to 11 (MASQKHSRGHG) has biased composition (basic residues). Residues 1–176 (MASQKHSRGH…SRSSSPMARR (176 aa)) form a disordered region. Alanine 2 carries the N-acetylalanine modification. The residue at position 7 (serine 7) is a Phosphoserine. A citrulline mark is found at arginine 25 and arginine 33. A Phosphoserine modification is found at serine 58. Deamidated asparagine is present on asparagine 97. Threonine 103 carries the phosphothreonine modification. At glutamine 108 the chain carries Deamidated glutamine. Arginine 111 carries the symmetric dimethylarginine modification. The residue at position 117 (serine 117) is a Phosphoserine. A compositionally biased stretch (basic and acidic residues) spans 134–153 (SLEHHKSSYKGYKDPHREGH). The segment covering 166 to 176 (RSRSSSPMARR) has biased composition (polar residues). Phosphoserine occurs at positions 167 and 171. Citrulline is present on arginine 176.

The protein belongs to the myelin basic protein family. Homodimer. Post-translationally, as in other animals, several charge isomers may be produced as a result of optional post-translational modifications, such as phosphorylation of serine or threonine residues, deamidation of glutamine or asparagine residues, citrullination and methylation of arginine residues.

The protein localises to the myelin membrane. Is, with PLP, the most abundant protein component of the myelin membrane in the CNS. Plays a role in both the formation and stabilization of this compact multilayer arrangement of bilayers. Each splice variant and charge isomer may have a specialized function in the assembly of an optimized, biochemically functional myelin membrane. This chain is Myelin basic protein (mbp), found in Xenopus laevis (African clawed frog).